Reading from the N-terminus, the 468-residue chain is Phenylalanine--tRNA ligase alpha subunit (468 aa).

L-phenylalanine contacts are provided by residues Thr-311, 350-352 (QLD), and Phe-390. Glu-392 contributes to the Mg(2+) binding site.

Belongs to the class-II aminoacyl-tRNA synthetase family. Phe-tRNA synthetase alpha subunit type 2 subfamily. Tetramer of two alpha and two beta subunits. Mg(2+) serves as cofactor.

It localises to the cytoplasm. The catalysed reaction is tRNA(Phe) + L-phenylalanine + ATP = L-phenylalanyl-tRNA(Phe) + AMP + diphosphate + H(+). The chain is Phenylalanine--tRNA ligase alpha subunit from Saccharolobus solfataricus (strain ATCC 35092 / DSM 1617 / JCM 11322 / P2) (Sulfolobus solfataricus).